Reading from the N-terminus, the 248-residue chain is Probable transcriptional regulatory protein Plav_2114 (248 aa).

Belongs to the TACO1 family.

Its subcellular location is the cytoplasm. This is Probable transcriptional regulatory protein Plav_2114 from Parvibaculum lavamentivorans (strain DS-1 / DSM 13023 / NCIMB 13966).